The primary structure comprises 626 residues: tRNA uridine 5-carboxymethylaminomethyl modification enzyme MnmG (626 aa).

14–19 is a binding site for FAD; sequence GAGHAG. 273 to 287 lines the NAD(+) pocket; it reads GPRYCPSIEDKVVRF.

This sequence belongs to the MnmG family. Homodimer. Heterotetramer of two MnmE and two MnmG subunits. FAD is required as a cofactor.

It is found in the cytoplasm. Functionally, NAD-binding protein involved in the addition of a carboxymethylaminomethyl (cmnm) group at the wobble position (U34) of certain tRNAs, forming tRNA-cmnm(5)s(2)U34. This Caldicellulosiruptor saccharolyticus (strain ATCC 43494 / DSM 8903 / Tp8T 6331) protein is tRNA uridine 5-carboxymethylaminomethyl modification enzyme MnmG.